A 556-amino-acid polypeptide reads, in one-letter code: 2-succinyl-5-enolpyruvyl-6-hydroxy-3-cyclohexene-1-carboxylate synthase (556 aa).

This sequence belongs to the TPP enzyme family. MenD subfamily. In terms of assembly, homodimer. The cofactor is Mg(2+). Requires Mn(2+) as cofactor. It depends on thiamine diphosphate as a cofactor.

The enzyme catalyses isochorismate + 2-oxoglutarate + H(+) = 5-enolpyruvoyl-6-hydroxy-2-succinyl-cyclohex-3-ene-1-carboxylate + CO2. The protein operates within quinol/quinone metabolism; 1,4-dihydroxy-2-naphthoate biosynthesis; 1,4-dihydroxy-2-naphthoate from chorismate: step 2/7. Its pathway is quinol/quinone metabolism; menaquinone biosynthesis. Functionally, catalyzes the thiamine diphosphate-dependent decarboxylation of 2-oxoglutarate and the subsequent addition of the resulting succinic semialdehyde-thiamine pyrophosphate anion to isochorismate to yield 2-succinyl-5-enolpyruvyl-6-hydroxy-3-cyclohexene-1-carboxylate (SEPHCHC). This Salmonella choleraesuis (strain SC-B67) protein is 2-succinyl-5-enolpyruvyl-6-hydroxy-3-cyclohexene-1-carboxylate synthase.